The primary structure comprises 115 residues: Large ribosomal subunit protein eL30 (115 aa).

Residues S10 and S16 each carry the phosphoserine modification. K26 carries the N6-acetyllysine; alternate modification. Residue K26 forms a Glycyl lysine isopeptide (Lys-Gly) (interchain with G-Cter in SUMO2); alternate linkage.

It belongs to the eukaryotic ribosomal protein eL30 family. In terms of assembly, component of the large ribosomal subunit.

The protein resides in the cytoplasm. In terms of biological role, component of the large ribosomal subunit. The ribosome is a large ribonucleoprotein complex responsible for the synthesis of proteins in the cell. This chain is Large ribosomal subunit protein eL30 (RPL30), found in Homo sapiens (Human).